The following is a 1293-amino-acid chain: Galactose/N-acetyl-D-galactosamine lectin heavy subunit 1 (1293 aa).

An N-terminal signal peptide occupies residues 1-15 (MKLLLLNILLLCCLA). The Extracellular segment spans residues 16–1234 (DKLNEFSADI…NNVGAIAAAT (1219 aa)). Residues Asn95, Asn198, Asn234, Asn261, Asn337, Asn377, Asn390, Asn468, Asn487, Asn643, Asn659, Asn890, Asn992, Asn1138, Asn1204, and Asn1214 are each glycosylated (N-linked (GlcNAc...) asparagine). A helical transmembrane segment spans residues 1235–1255 (TVAVVVVAVVVALIVVSIGLF). The Cytoplasmic portion of the chain corresponds to 1256 to 1293 (KTYQLVSSAMKNAITITNENAEYVGADNEATNAATFNG).

As to quaternary structure, heterodimer composed of a 170 kDa heavy subunit (hgl) and a 31/35 kDa light subunit (lgl); disulfide-linked. In terms of processing, N-glycosylated.

Its subcellular location is the cell membrane. Lectin which binds galactose and N-acetyl-D-galactosamine of host glycoproteins and thus mediates adhesion to host cells. Mediates adherence to host colonic mucins, an essential step for pathogenic tissue invasion. This chain is Galactose/N-acetyl-D-galactosamine lectin heavy subunit 1, found in Entamoeba histolytica (strain ATCC 30459 / HM-1:IMSS / ABRM).